The sequence spans 3946 residues: Hybrid PKS-NRPS synthetase lepA (3946 aa).

In terms of domain architecture, Ketosynthase family 3 (KS3) spans 9-440 (VEPIAIVGSA…GTNAHVILEG (432 aa)). Catalysis depends on for beta-ketoacyl synthase activity residues Cys183, His320, and His363. Residues 553-871 (IFTGQGAQWA…PYAGIMRRAT (319 aa)) are malonyl-CoA:ACP transacylase (MAT) domain. Positions 945-1073 (HELLGRRAPD…GRLILFKGEG (129 aa)) are N-terminal hotdog fold. A dehydratase (DH) domain region spans residues 945-1238 (HELLGRRAPD…RLQSFTEAKA (294 aa)). The region spanning 945 to 1239 (HELLGRRAPD…LQSFTEAKAL (295 aa)) is the PKS/mFAS DH domain. His977 functions as the Proton acceptor; for dehydratase activity in the catalytic mechanism. Residues 1088–1239 (LSPLDREMFY…LQSFTEAKAL (152 aa)) form a C-terminal hotdog fold region. The Proton donor; for dehydratase activity role is filled by Asp1147. Residues 1380-1580 (LLNRFYTDGR…ATVSDLPSDG (201 aa)) are methyltransferase (MT) domain. Residues 2093–2266 (TYWMIGLNSE…AASVIDIGLV (174 aa)) are ketoreductase (KR) domain. Positions 2352 to 2365 (SSQDSDQSNSTSAS) are enriched in low complexity. The disordered stretch occupies residues 2352 to 2372 (SSQDSDQSNSTSASIRDQVSS). One can recognise a Carrier 1 domain in the interval 2378–2455 (EGTDVLLRCF…EICAEAIQKF (78 aa)). O-(pantetheine 4'-phosphoryl)serine is present on Ser2415. Residues 2474-2531 (KQATASPPEIGREEAQSTSRAGILPTDQDNDNSSDSESQRKSGASSSSGSGTRTPTSI) are disordered. Residues 2508 to 2530 (DSESQRKSGASSSSGSGTRTPTS) are compositionally biased toward low complexity. Residues 2547–2976 (PMSYAQSRLW…MQIQDGLLND (430 aa)) form a condensation (C) domain region. The adenylation (A) (KR) domain stretch occupies residues 3000 to 3402 (FSQRAATDAN…GGLIFMGRLD (403 aa)). The segment at 3492-3511 (GKVDRKALQDKPLPTEPDSS) is disordered. The Carrier 2 domain occupies 3515-3594 (EALSLAEGEL…RMATLIDAEK (80 aa)). O-(pantetheine 4'-phosphoryl)serine is present on Ser3554. The reductase (RED) domain stretch occupies residues 3633–3833 (LTGSTGFLGM…RFSVLMKVVP (201 aa)).

In the C-terminal section; belongs to the NRP synthetase family.

Functionally, hybrid PKS-NRPS synthetase; part of the gene cluster 23 that mediates the biosynthesis of a family of 2-pyridones known as leporins. The hybrid PKS-NRPS synthetase lepA and the enoyl reductase lepG are responsible for fusion of phenylalanine with a hexaketide and subsequent release of the stable tetramic acid precursor, pre-leporin C. Because lepA lacks a designated enoylreductase (ER) domain, the required activity is provided the enoyl reductase lepG. It is possible that the dehydrogenase lepF also participates in production of pre-leporin C. Cytochrome P450 monooxygenase lepH is then required for the ring expansion step to yield leporin C. Leporin C is then presumably further oxidized by the N-hydroxylase lepD to form leporin B. LepI may possess a function in biosynthesis upstream of lepA. Leporin B is further oxidized in the presence of ferric ion to give the leporin B trimer-iron chelate, but whether or not this reaction is catalyzed by an enzyme in the pathway or by ferric ion is not determined yet. This is Hybrid PKS-NRPS synthetase lepA from Aspergillus flavus (strain ATCC 200026 / FGSC A1120 / IAM 13836 / NRRL 3357 / JCM 12722 / SRRC 167).